A 152-amino-acid polypeptide reads, in one-letter code: FMN reductase (NADH) RutF (152 aa).

The protein belongs to the non-flavoprotein flavin reductase family. RutF subfamily.

It carries out the reaction FMNH2 + NAD(+) = FMN + NADH + 2 H(+). In terms of biological role, catalyzes the reduction of FMN to FMNH2 which is used to reduce pyrimidine by RutA via the Rut pathway. The polypeptide is FMN reductase (NADH) RutF (Shigella dysenteriae serotype 1 (strain Sd197)).